The primary structure comprises 336 residues: 4-aminobenzoate N-oxygenase (336 aa).

Y93 serves as a coordination point for 4-nitrobenzoate. Residues E101, E136, H139, and E196 each contribute to the Fe cation site. N200 contributes to the 4-nitrobenzoate binding site. Fe cation is bound by residues H223, E227, and H230.

Belongs to the AurF N-oxygenase family. Homodimer. It depends on Fe(2+) as a cofactor.

The enzyme catalyses 4-aminobenzoate + AH2 + 2 O2 = 4-nitrobenzoate + A + 2 H2O. It functions in the pathway antibiotic biosynthesis. In terms of biological role, involved in the biosynthesis of the polyketide antibiotic aureothin. Catalyzes the oxidation of p-aminobenzoate (pABA) to p-nitrobenzoate (pNBA), an unusual polyketide synthase starter unit. Reaction mechanism involves the generation of a peroxodiiron(III/III) intermediate, which effects the initial oxidation of p-aminobenzoate to p-hydroxylaminobenzoate (Ar-NHOH). Ar-NHOH is then probably directly converted to the fully oxidized p-nitrobenzoate via a four-electron N-oxidation, bypassing the formation of a nitroso compound. This chain is 4-aminobenzoate N-oxygenase, found in Streptomyces thioluteus.